The sequence spans 260 residues: Neurotrophin-3 (260 aa).

A signal peptide spans 1–18; sequence MSILFYVMFLPYLCGIHA. The propeptide occupies 19 to 141; it reads TNMDKRNLPE…VNNRTSRRKR (123 aa). Asn-134 carries N-linked (GlcNAc...) asparagine glycosylation. 3 disulfide bridges follow: Cys-155–Cys-220, Cys-198–Cys-249, and Cys-208–Cys-251.

The protein belongs to the NGF-beta family.

It is found in the secreted. Its function is as follows. Seems to promote the survival of visceral and proprioceptive sensory neurons. The chain is Neurotrophin-3 (ntf3) from Xenopus laevis (African clawed frog).